A 385-amino-acid chain; its full sequence is 8-amino-7-oxononanoate synthase (385 aa).

Arg21 contributes to the substrate binding site. 108 to 109 (GF) is a pyridoxal 5'-phosphate binding site. His133 is a binding site for substrate. Ser179, His207, and Thr233 together coordinate pyridoxal 5'-phosphate. Position 236 is an N6-(pyridoxal phosphate)lysine (Lys236). Substrate is bound at residue Thr352.

Belongs to the class-II pyridoxal-phosphate-dependent aminotransferase family. BioF subfamily. In terms of assembly, homodimer. The cofactor is pyridoxal 5'-phosphate.

It carries out the reaction 6-carboxyhexanoyl-[ACP] + L-alanine + H(+) = (8S)-8-amino-7-oxononanoate + holo-[ACP] + CO2. It functions in the pathway cofactor biosynthesis; biotin biosynthesis. Catalyzes the decarboxylative condensation of pimeloyl-[acyl-carrier protein] and L-alanine to produce 8-amino-7-oxononanoate (AON), [acyl-carrier protein], and carbon dioxide. This is 8-amino-7-oxononanoate synthase from Salmonella typhimurium (strain LT2 / SGSC1412 / ATCC 700720).